A 362-amino-acid polypeptide reads, in one-letter code: Dihydroorotate dehydrogenase (quinone) (362 aa).

Residues 62–66 (AGYDK) and threonine 86 each bind FMN. Position 66 (lysine 66) interacts with substrate. Position 111-115 (111-115 (NRLGF)) interacts with substrate. Residues asparagine 139 and asparagine 170 each contribute to the FMN site. Asparagine 170 contacts substrate. Serine 173 functions as the Nucleophile in the catalytic mechanism. Asparagine 175 provides a ligand contact to substrate. 2 residues coordinate FMN: lysine 215 and serine 243. Substrate is bound at residue 244–245 (NT). FMN contacts are provided by residues glycine 266, glycine 295, and 316–317 (YS).

It belongs to the dihydroorotate dehydrogenase family. Type 2 subfamily. Monomer. Requires FMN as cofactor.

It is found in the cell membrane. The enzyme catalyses (S)-dihydroorotate + a quinone = orotate + a quinol. Its pathway is pyrimidine metabolism; UMP biosynthesis via de novo pathway; orotate from (S)-dihydroorotate (quinone route): step 1/1. In terms of biological role, catalyzes the conversion of dihydroorotate to orotate with quinone as electron acceptor. The chain is Dihydroorotate dehydrogenase (quinone) from Sinorhizobium medicae (strain WSM419) (Ensifer medicae).